Reading from the N-terminus, the 257-residue chain is uncharacterized protein (257 aa).

Residues Met1–Ala22 form the signal peptide. A lipid anchor (N-palmitoyl cysteine) is attached at Cys23. The S-diacylglycerol cysteine moiety is linked to residue Cys23.

It belongs to the staphylococcal tandem lipoprotein family.

The protein resides in the cell membrane. This is an uncharacterized protein from Staphylococcus aureus (strain Mu50 / ATCC 700699).